A 140-amino-acid chain; its full sequence is Large ribosomal subunit protein mL43 (140 aa).

It belongs to the mitochondrion-specific ribosomal protein mL43 family. As to quaternary structure, component of the mitochondrial large ribosomal subunit (mt-LSU). Mature yeast 74S mitochondrial ribosomes consist of a small (37S) and a large (54S) subunit. The 37S small subunit contains a 15S ribosomal RNA (15S mt-rRNA) and 34 different proteins. The 54S large subunit contains a 21S rRNA (21S mt-rRNA) and 46 different proteins.

Its subcellular location is the mitochondrion. Component of the mitochondrial ribosome (mitoribosome), a dedicated translation machinery responsible for the synthesis of mitochondrial genome-encoded proteins, including at least some of the essential transmembrane subunits of the mitochondrial respiratory chain. The mitoribosomes are attached to the mitochondrial inner membrane and translation products are cotranslationally integrated into the membrane. Also has an extraribosomal function, being essential for mitochondrial genome integrity. May interact with MHR1 to take part in the mtDNA repair mechanism. This chain is Large ribosomal subunit protein mL43 (MRPL51), found in Saccharomyces cerevisiae (strain ATCC 204508 / S288c) (Baker's yeast).